The primary structure comprises 277 residues: NH(3)-dependent NAD(+) synthetase (277 aa).

Residue 46–53 coordinates ATP; that stretch reads GISGGQDS. D52 lines the Mg(2+) pocket. R141 serves as a coordination point for deamido-NAD(+). Residue T161 coordinates ATP. E166 contributes to the Mg(2+) binding site. Residues K174 and D181 each contribute to the deamido-NAD(+) site. ATP is bound by residues K190 and T212. 262–263 contacts deamido-NAD(+); the sequence is HK.

The protein belongs to the NAD synthetase family. Homodimer.

The enzyme catalyses deamido-NAD(+) + NH4(+) + ATP = AMP + diphosphate + NAD(+) + H(+). Its pathway is cofactor biosynthesis; NAD(+) biosynthesis; NAD(+) from deamido-NAD(+) (ammonia route): step 1/1. Catalyzes the ATP-dependent amidation of deamido-NAD to form NAD. Uses ammonia as a nitrogen source. The sequence is that of NH(3)-dependent NAD(+) synthetase from Corynebacterium efficiens (strain DSM 44549 / YS-314 / AJ 12310 / JCM 11189 / NBRC 100395).